We begin with the raw amino-acid sequence, 286 residues long: Ribonuclease Z (286 aa).

Zn(2+)-binding residues include His-61, His-63, Asp-65, His-66, His-153, Asp-176, and His-240. Catalysis depends on Asp-65, which acts as the Proton acceptor.

The protein belongs to the RNase Z family. Homodimer. Zn(2+) is required as a cofactor.

The catalysed reaction is Endonucleolytic cleavage of RNA, removing extra 3' nucleotides from tRNA precursor, generating 3' termini of tRNAs. A 3'-hydroxy group is left at the tRNA terminus and a 5'-phosphoryl group is left at the trailer molecule.. In terms of biological role, zinc phosphodiesterase, which displays some tRNA 3'-processing endonuclease activity. Probably involved in tRNA maturation, by removing a 3'-trailer from precursor tRNA. The protein is Ribonuclease Z of Mycolicibacterium gilvum (strain PYR-GCK) (Mycobacterium gilvum (strain PYR-GCK)).